Reading from the N-terminus, the 200-residue chain is Recombination protein RecR (200 aa).

A C4-type zinc finger spans residues 57 to 72 (CSQCRDFTEEDTCNIC). The Toprim domain maps to 81 to 176 (GLLCVVEMPA…KVSRIAHGIP (96 aa)).

The protein belongs to the RecR family.

Functionally, may play a role in DNA repair. It seems to be involved in an RecBC-independent recombinational process of DNA repair. It may act with RecF and RecO. The sequence is that of Recombination protein RecR from Haemophilus influenzae (strain 86-028NP).